We begin with the raw amino-acid sequence, 486 residues long: Protein nucleotidyltransferase YdiU (486 aa).

The ATP site is built by Gly90, Gly92, Arg93, Lys113, Asp125, Gly126, Arg176, and Arg183. The active-site Proton acceptor is Asp252. The Mg(2+) site is built by Asn253 and Asp262. Asp262 is a binding site for ATP.

Belongs to the SELO family. It depends on Mg(2+) as a cofactor. Requires Mn(2+) as cofactor.

It carries out the reaction L-seryl-[protein] + ATP = 3-O-(5'-adenylyl)-L-seryl-[protein] + diphosphate. The enzyme catalyses L-threonyl-[protein] + ATP = 3-O-(5'-adenylyl)-L-threonyl-[protein] + diphosphate. It catalyses the reaction L-tyrosyl-[protein] + ATP = O-(5'-adenylyl)-L-tyrosyl-[protein] + diphosphate. The catalysed reaction is L-histidyl-[protein] + UTP = N(tele)-(5'-uridylyl)-L-histidyl-[protein] + diphosphate. It carries out the reaction L-seryl-[protein] + UTP = O-(5'-uridylyl)-L-seryl-[protein] + diphosphate. The enzyme catalyses L-tyrosyl-[protein] + UTP = O-(5'-uridylyl)-L-tyrosyl-[protein] + diphosphate. Functionally, nucleotidyltransferase involved in the post-translational modification of proteins. It can catalyze the addition of adenosine monophosphate (AMP) or uridine monophosphate (UMP) to a protein, resulting in modifications known as AMPylation and UMPylation. The protein is Protein nucleotidyltransferase YdiU of Pseudomonas aeruginosa (strain ATCC 15692 / DSM 22644 / CIP 104116 / JCM 14847 / LMG 12228 / 1C / PRS 101 / PAO1).